Consider the following 92-residue polypeptide: Small ribosomal subunit protein uS19c (92 aa).

It belongs to the universal ribosomal protein uS19 family. As to quaternary structure, component of the chloroplast small ribosomal subunit (SSU). Mature 70S chloroplast ribosomes of higher plants consist of a small (30S) and a large (50S) subunit. The 30S small subunit contains 1 molecule of ribosomal RNA (16S rRNA) and 24 different proteins. The 50S large subunit contains 3 rRNA molecules (23S, 5S and 4.5S rRNA) and 33 different proteins. uS19c binds directly to 16S ribosomal RNA.

It localises to the plastid. The protein resides in the chloroplast. In terms of biological role, component of the chloroplast ribosome (chloro-ribosome), a dedicated translation machinery responsible for the synthesis of chloroplast genome-encoded proteins, including proteins of the transcription and translation machinery and components of the photosynthetic apparatus. The protein is Small ribosomal subunit protein uS19c (rps19) of Spinacia oleracea (Spinach).